Consider the following 170-residue polypeptide: Cathelicidin antimicrobial peptide (170 aa).

An N-terminal signal peptide occupies residues 1–30 (MKTQRHGPSLGRWSLVLLLLGLVMPLAIVA). Residues 31 to 131 (QVLSYQEAVL…DISCDKDNRR (101 aa)) constitute a propeptide, cathelin-like domain (CLD). 2 disulfide bridges follow: C86-C97 and C108-C125. Residues 150–162 (LKKIGQKIKDFLG) are active core.

The protein belongs to the cathelicidin family. In terms of assembly, monomer, homodimer or homotrimer (in vitro). Oligomerizes as tetra- or hexamer in solution (in vitro). Proteolytically cleaved by proteinase PRTN3 into antibacterial peptide LL-37. Proteolytically cleaved by cathepsin CTSG and neutrophil elastase ELANE. Post-translationally, resistant to proteolytic degradation in solution, and when bound to both zwitterionic (mimicking mammalian membranes) and negatively charged membranes (mimicking bacterial membranes). In terms of processing, after secretion onto the skin surface, the CAMP gene product is processed by a serine protease-dependent mechanism into multiple novel antimicrobial peptides distinct from and shorter than cathelicidin LL-37. These peptides show enhanced antimicrobial action, acquiring the ability to kill skin pathogens such as S.aureus, E.coli and C.albicans. These peptides have lost the ability to stimulate CXCL8/IL8 release from keratinocytes. The peptides act synergistically, killing bacteria at lower concentrations when present together, and maintain activity at increased salt condition.

The protein localises to the secreted. It localises to the vesicle. Functionally, antimicrobial protein that is an integral component of the innate immune system. Binds to bacterial lipopolysaccharides (LPS). Acts via neutrophil N-formyl peptide receptors to enhance the release of CXCL2. Postsecretory processing generates multiple cathelicidin antimicrobial peptides with various lengths which act as a topical antimicrobial defense in sweat on skin. The unprocessed precursor form, cathelicidin antimicrobial peptide, inhibits the growth of Gram-negative E.coli and E.aerogenes with efficiencies comparable to that of the mature peptide LL-37 (in vitro). Its function is as follows. Antimicrobial peptide that is an integral component of the innate immune system. Binds to bacterial lipopolysaccharides (LPS). Causes membrane permeabilization by forming transmembrane pores (in vitro). Causes lysis of E.coli. Exhibits antimicrobial activity against Gram-negative bacteria such as P.aeruginosa, S.typhimurium, E.aerogenes, E.coli and P.syringae, Gram-positive bacteria such as L.monocytogenes, S.epidermidis, S.pyogenes and S.aureus, as well as vancomycin-resistant enterococci (in vitro). Exhibits antimicrobial activity against methicillin-resistant S.aureus, P.mirabilis, and C.albicans in low-salt media, but not in media containing 100 mM NaCl (in vitro). Forms chiral supramolecular assemblies with quinolone signal (PQS) molecules of P.aeruginosa, which may lead to interference of bacterial quorum signaling and perturbance of bacterial biofilm formation. May form supramolecular fiber-like assemblies on bacterial membranes. Induces cytokine and chemokine producation as well as TNF/TNFA and CSF2/GMCSF production in normal human keratinocytes. Exhibits hemolytic activity against red blood cells. Exhibits antimicrobial activity against E.coli and B.megaterium (in vitro). This Trachypithecus obscurus (Dusky leaf-monkey) protein is Cathelicidin antimicrobial peptide.